The chain runs to 263 residues: Ribosomal RNA large subunit methyltransferase E (263 aa).

5 residues coordinate S-adenosyl-L-methionine: Gly48, Trp50, Asp68, Asp88, and Asp118. Residue Lys158 is the Proton acceptor of the active site. In terms of domain architecture, TRAM spans 205-263 (PVREGDIVEATIEDIGEEGDGIAKVENFTVFVSGVEDGETVEVRIDDVKPRYAFAEPVE).

This sequence belongs to the class I-like SAM-binding methyltransferase superfamily. RNA methyltransferase RlmE family.

The protein localises to the cytoplasm. The enzyme catalyses uridine(2552) in 23S rRNA + S-adenosyl-L-methionine = 2'-O-methyluridine(2552) in 23S rRNA + S-adenosyl-L-homocysteine + H(+). Specifically methylates the uridine in position 2552 of 23S rRNA at the 2'-O position of the ribose in the fully assembled 50S ribosomal subunit. This is Ribosomal RNA large subunit methyltransferase E from Haloarcula marismortui (strain ATCC 43049 / DSM 3752 / JCM 8966 / VKM B-1809) (Halobacterium marismortui).